The following is a 513-amino-acid chain: ATP synthase subunit alpha (513 aa).

169-176 contributes to the ATP binding site; it reads GDRQTGKT.

This sequence belongs to the ATPase alpha/beta chains family. In terms of assembly, F-type ATPases have 2 components, CF(1) - the catalytic core - and CF(0) - the membrane proton channel. CF(1) has five subunits: alpha(3), beta(3), gamma(1), delta(1), epsilon(1). CF(0) has three main subunits: a(1), b(2) and c(9-12). The alpha and beta chains form an alternating ring which encloses part of the gamma chain. CF(1) is attached to CF(0) by a central stalk formed by the gamma and epsilon chains, while a peripheral stalk is formed by the delta and b chains.

The protein resides in the cell inner membrane. The catalysed reaction is ATP + H2O + 4 H(+)(in) = ADP + phosphate + 5 H(+)(out). Functionally, produces ATP from ADP in the presence of a proton gradient across the membrane. The alpha chain is a regulatory subunit. The chain is ATP synthase subunit alpha from Pseudoalteromonas translucida (strain TAC 125).